A 60-amino-acid chain; its full sequence is UPF0434 protein Spro_1718 (60 aa).

The protein belongs to the UPF0434 family.

The protein is UPF0434 protein Spro_1718 of Serratia proteamaculans (strain 568).